We begin with the raw amino-acid sequence, 336 residues long: Glyceraldehyde-3-phosphate dehydrogenase (336 aa).

NAD(+) contacts are provided by residues 12-13 (RI), aspartate 34, arginine 78, and threonine 121. D-glyceraldehyde 3-phosphate contacts are provided by residues 151-153 (SCT), threonine 182, arginine 199, 212-213 (TG), and arginine 235. The active-site Nucleophile is the cysteine 152. Asparagine 316 provides a ligand contact to NAD(+).

Belongs to the glyceraldehyde-3-phosphate dehydrogenase family. Homotetramer.

The protein resides in the cytoplasm. It catalyses the reaction D-glyceraldehyde 3-phosphate + phosphate + NAD(+) = (2R)-3-phospho-glyceroyl phosphate + NADH + H(+). The protein operates within carbohydrate degradation; glycolysis; pyruvate from D-glyceraldehyde 3-phosphate: step 1/5. Functionally, catalyzes the oxidative phosphorylation of glyceraldehyde 3-phosphate (G3P) to 1,3-bisphosphoglycerate (BPG) using the cofactor NAD. The first reaction step involves the formation of a hemiacetal intermediate between G3P and a cysteine residue, and this hemiacetal intermediate is then oxidized to a thioester, with concomitant reduction of NAD to NADH. The reduced NADH is then exchanged with the second NAD, and the thioester is attacked by a nucleophilic inorganic phosphate to produce BPG. This is Glyceraldehyde-3-phosphate dehydrogenase (gap) from Streptococcus dysgalactiae subsp. equisimilis (Streptococcus equisimilis).